A 457-amino-acid polypeptide reads, in one-letter code: ATP synthase subunit beta (457 aa).

150 to 157 (GGAGVGKT) provides a ligand contact to ATP.

The protein belongs to the ATPase alpha/beta chains family. As to quaternary structure, F-type ATPases have 2 components, CF(1) - the catalytic core - and CF(0) - the membrane proton channel. CF(1) has five subunits: alpha(3), beta(3), gamma(1), delta(1), epsilon(1). CF(0) has three main subunits: a(1), b(2) and c(9-12). The alpha and beta chains form an alternating ring which encloses part of the gamma chain. CF(1) is attached to CF(0) by a central stalk formed by the gamma and epsilon chains, while a peripheral stalk is formed by the delta and b chains.

The protein localises to the cell membrane. The catalysed reaction is ATP + H2O + 4 H(+)(in) = ADP + phosphate + 5 H(+)(out). Its function is as follows. Produces ATP from ADP in the presence of a proton gradient across the membrane. The catalytic sites are hosted primarily by the beta subunits. The polypeptide is ATP synthase subunit beta (Baumannia cicadellinicola subsp. Homalodisca coagulata).